The primary structure comprises 354 residues: UPF0283 protein YcjF (354 aa).

A run of 3 helical transmembrane segments spans residues 71-91 (MVTV…VQWV), 101-121 (IALG…GSVV), and 214-234 (ESAL…FIAW).

Belongs to the UPF0283 family.

Its subcellular location is the cell inner membrane. This is UPF0283 protein YcjF (ycjF) from Yersinia enterocolitica.